Here is a 329-residue protein sequence, read N- to C-terminus: 4-hydroxy-3-methylbut-2-enyl diphosphate reductase 1 (329 aa).

Cys-29 serves as a coordination point for [4Fe-4S] cluster. (2E)-4-hydroxy-3-methylbut-2-enyl diphosphate contacts are provided by His-58 and His-95. 2 residues coordinate dimethylallyl diphosphate: His-58 and His-95. Isopentenyl diphosphate-binding residues include His-58 and His-95. Cys-117 lines the [4Fe-4S] cluster pocket. Position 145 (His-145) interacts with (2E)-4-hydroxy-3-methylbut-2-enyl diphosphate. Residue His-145 coordinates dimethylallyl diphosphate. His-145 provides a ligand contact to isopentenyl diphosphate. Catalysis depends on Glu-147, which acts as the Proton donor. Thr-185 is a binding site for (2E)-4-hydroxy-3-methylbut-2-enyl diphosphate. [4Fe-4S] cluster is bound at residue Cys-215. Residues Ser-243, Ser-244, Asn-245, and Ser-287 each contribute to the (2E)-4-hydroxy-3-methylbut-2-enyl diphosphate site. The dimethylallyl diphosphate site is built by Ser-243, Ser-244, Asn-245, and Ser-287. 4 residues coordinate isopentenyl diphosphate: Ser-243, Ser-244, Asn-245, and Ser-287.

This sequence belongs to the IspH family. [4Fe-4S] cluster is required as a cofactor.

It carries out the reaction isopentenyl diphosphate + 2 oxidized [2Fe-2S]-[ferredoxin] + H2O = (2E)-4-hydroxy-3-methylbut-2-enyl diphosphate + 2 reduced [2Fe-2S]-[ferredoxin] + 2 H(+). The enzyme catalyses dimethylallyl diphosphate + 2 oxidized [2Fe-2S]-[ferredoxin] + H2O = (2E)-4-hydroxy-3-methylbut-2-enyl diphosphate + 2 reduced [2Fe-2S]-[ferredoxin] + 2 H(+). The protein operates within isoprenoid biosynthesis; dimethylallyl diphosphate biosynthesis; dimethylallyl diphosphate from (2E)-4-hydroxy-3-methylbutenyl diphosphate: step 1/1. It functions in the pathway isoprenoid biosynthesis; isopentenyl diphosphate biosynthesis via DXP pathway; isopentenyl diphosphate from 1-deoxy-D-xylulose 5-phosphate: step 6/6. Functionally, catalyzes the conversion of 1-hydroxy-2-methyl-2-(E)-butenyl 4-diphosphate (HMBPP) into a mixture of isopentenyl diphosphate (IPP) and dimethylallyl diphosphate (DMAPP). Acts in the terminal step of the DOXP/MEP pathway for isoprenoid precursor biosynthesis. The chain is 4-hydroxy-3-methylbut-2-enyl diphosphate reductase 1 from Mycobacterium tuberculosis (strain CDC 1551 / Oshkosh).